The following is a 1784-amino-acid chain: Histone acetyltransferase KAT6B (1784 aa).

Residues 1–77 (MVKLANPLYT…LASYKDPDNP (77 aa)) form the SAMD1-like winged helix (WH) domain. Residues 72 to 98 (KDPDNPGRFSSVKPGTFPKSTKESRGS) form a disordered region. Residues 103 to 176 (RNVDWNKLLR…KDGPQYRVNY (74 aa)) form the H15 domain. PHD-type zinc fingers lie at residues 213 to 272 (IPIC…CKTC) and 269 to 320 (CKTC…CRPK). Ser355 carries the post-translational modification Phosphoserine. Residues 361 to 425 (GSMNAFTGRG…ECESGVEDCG (65 aa)) are negatively regulates HAT activity. A Glycyl lysine isopeptide (Lys-Gly) (interchain with G-Cter in SUMO2) cross-link involves residue Lys381. In terms of domain architecture, MYST-type HAT spans 423-697 (DCGRYPSVIE…LDPDSLRWTP (275 aa)). The catalytic stretch occupies residues 426-716 (RYPSVIEFGK…EEEREAEKEA (291 aa)). The C2HC MYST-type zinc-finger motif lies at 456-481 (LYLCEFCLKYMKSKNILLRHSKKCGW). The tract at residues 460–716 (EFCLKYMKSK…EEEREAEKEA (257 aa)) is interaction with BRPF1. Residue Lys523 is modified to N6-acetyllysine; by autocatalysis. Acetyl-CoA contacts are provided by residues 564–568 (SCIMI) and 573–579 (QRQGFGR). Residue Glu599 is the Proton donor/acceptor of the active site. Ser603 is an acetyl-CoA binding site. Disordered regions lie at residues 730-884 (EQEV…RPMP), 904-1163 (RKAF…FKEV), 1195-1273 (SCNS…FQDC), and 1291-1330 (QSPQIATTLDDCQQSDHSSPVSSVHSHPGQSVRSVNSPSV). The span at 733 to 751 (VLSTRANSRQSPAKVQSKN) shows a compositional bias: polar residues. 3 positions are modified to N6-acetyllysine: Lys746, Lys750, and Lys752. The residue at position 756 (Ser756) is a Phosphoserine. The segment covering 777–819 (SEEEEEEEEDEEEEDEEEEEEEEEDEEEEEEEEEEEEEEEEEN) has biased composition (acidic residues). Over residues 820–831 (IQSSPPRLTKPQ) the composition is skewed to polar residues. Positions 835-854 (IKRKRPFVLKKKRGRKRRRI) are enriched in basic residues. The segment covering 856-869 (SSVTTETISETTEV) has biased composition (low complexity). The segment covering 904–914 (RKAFQHQPGKK) has biased composition (basic residues). 2 stretches are compositionally biased toward basic and acidic residues: residues 938-957 (MNDDSRNLKEGSKDNPEPLK) and 1055-1064 (EKPEDDLIKP). Over residues 1065–1087 (EEEEEEEEEEEEEEGEEEEEEGG) the composition is skewed to acidic residues. Basic and acidic residues-rich tracts occupy residues 1088–1101 (NVEKDPDGAKSQEK) and 1107–1118 (SPEKEDSARLDD). Acidic residues predominate over residues 1119-1128 (HEEEEEEDEE). The segment covering 1144-1163 (HMESAEVEKEELPRESFKEV) has biased composition (basic and acidic residues). Positions 1209-1218 (AVPESDEEPP) are enriched in acidic residues. Basic and acidic residues predominate over residues 1224 to 1240 (QKQDQKNSKEVDTEFKE). 2 stretches are compositionally biased toward polar residues: residues 1251-1263 (ETVQAVQSLTQES) and 1291-1302 (QSPQIATTLDDC). Residues 1271 to 1784 (QDCAETQEAC…QSLNGSYMRR (514 aa)) form an interaction with RUNX1 and RUNX2 region. Residues 1305-1322 (SDHSSPVSSVHSHPGQSV) show a composition bias toward low complexity.

Belongs to the MYST (SAS/MOZ) family. Component of the MOZ/MORF complex composed at least of ING5, KAT6A, KAT6B, MEAF6 and one of BRPF1, BRD1/BRPF2 and BRPF3. Interacts with RUNX1 and RUNX2. Autoacetylation at Lys-523 is required for proper function.

It is found in the nucleus. It catalyses the reaction L-lysyl-[protein] + acetyl-CoA = N(6)-acetyl-L-lysyl-[protein] + CoA + H(+). Functionally, histone acetyltransferase which may be involved in both positive and negative regulation of transcription. Required for RUNX2-dependent transcriptional activation. May be involved in cerebral cortex development. Component of the MOZ/MORF complex which has a histone H3 acetyltransferase activity. This is Histone acetyltransferase KAT6B (KAT6B) from Macaca fascicularis (Crab-eating macaque).